A 527-amino-acid chain; its full sequence is Light-independent protochlorophyllide reductase subunit B (527 aa).

D36 lines the [4Fe-4S] cluster pocket. Residue D290 is the Proton donor of the active site. A substrate-binding site is contributed by 425–426; that stretch reads GL.

This sequence belongs to the ChlB/BchB/BchZ family. In terms of assembly, protochlorophyllide reductase is composed of three subunits; ChlL, ChlN and ChlB. Forms a heterotetramer of two ChlB and two ChlN subunits. The cofactor is [4Fe-4S] cluster.

It catalyses the reaction chlorophyllide a + oxidized 2[4Fe-4S]-[ferredoxin] + 2 ADP + 2 phosphate = protochlorophyllide a + reduced 2[4Fe-4S]-[ferredoxin] + 2 ATP + 2 H2O. It functions in the pathway porphyrin-containing compound metabolism; chlorophyll biosynthesis (light-independent). Functionally, component of the dark-operative protochlorophyllide reductase (DPOR) that uses Mg-ATP and reduced ferredoxin to reduce ring D of protochlorophyllide (Pchlide) to form chlorophyllide a (Chlide). This reaction is light-independent. The NB-protein (ChlN-ChlB) is the catalytic component of the complex. The chain is Light-independent protochlorophyllide reductase subunit B from Synechococcus sp. (strain RCC307).